Here is a 747-residue protein sequence, read N- to C-terminus: METAEKECGALGGLFQAIVNDMKSSYPIWEDFNSKATKLHSQLRTTVLAAVAFLDAFQKVADMATNTRGATRDIGSALTRMCMRHRSIETKLRQFTNALLESLINPLQERIEDWKKAANQLDKDHAKEYKRARHEIKKKSSDTLKLQKKARKELLGKGDLQPQLDSALQDVNDMYLLLEETEKQAVRRALIEERGRFCTFITFLQPVVNGELTMLGEITHLQGIIDDLVVLTAEPHKLPPASEQVIKDLKGSDYSWSYQTPPSSPSSSSSRKSSMCSAPSSSSSAKGGGAPWPGGAQTYSPSSTCRYRSLAQPATTTARLSSVSSHDSGFVSQDATYSKPPSPMPSDITSQKSSSSASSEASETCQSVSECSSPTSDWSKVGSHEQPSGATLQRRKDRVELLRDTEPGPASGGTLGPSGEEAPRPRMSPATIAAKHGEEVSPAASDLAMVLTRGLSLEHQKSSRDSLQYSSGYSTQTTTPSCSEDTIPSQGSDYDCYSVNGDADSEGPPEFDKSSTIPRNSNIAQNYRRLIQTKRPASTAGLPTAGLPTATGLPSGAPPGVATIRRTPSTKPTVRRALSSAGPIPIRPPIVPVKTPTVPDSPGYMGPTRAGSEECVFYTDETASPLAPDLAKASPKRLSLPNTAWGSPSPEAAGYPGAGAEDEQQQLAANRHSLVEKLGELVAGAHALGEGQFPFPTALSATPTEETPTPPPAATSDPPAEDMLVAIRRGVRLRRTVTNDRSAPRIL.

The region spanning 1-252 is the IMD domain; that stretch reads METAEKECGA…EQVIKDLKGS (252 aa). A coiled-coil region spans residues 135 to 159; the sequence is EIKKKSSDTLKLQKKARKELLGKGD. Low complexity-rich tracts occupy residues 256-284, 321-332, and 349-367; these read WSYQ…SSSS, SSVSSHDSGFVS, and TSQK…TCQS. 4 disordered regions span residues 256–302, 318–441, 457–522, and 543–599; these read WSYQ…YSPS, ARLS…EEVS, LEHQ…RNSN, and PTAG…PTVP. Thr260 is subject to Phosphothreonine. Ser264 is modified (phosphoserine). The span at 368–378 shows a compositional bias: polar residues; it reads VSECSSPTSDW. The segment covering 397–406 has biased composition (basic and acidic residues); sequence DRVELLRDTE. Ser441 bears the Phosphoserine mark. Positions 466-479 are enriched in low complexity; the sequence is SLQYSSGYSTQTTT. Residues 480–492 are compositionally biased toward polar residues; it reads PSCSEDTIPSQGS. Phosphoserine is present on residues Ser579, Ser601, Ser612, Ser624, Ser634, and Ser639. 2 disordered regions span residues 638 to 664 and 691 to 720; these read LSLP…EDEQ and GQFP…DPPA. At Thr643 the chain carries Phosphothreonine. Composition is skewed to low complexity over residues 646 to 659 and 696 to 707; these read GSPS…PGAG and PTALSATPTEET. Residues 719-736 enclose the WH2 domain; that stretch reads PAEDMLVAIRRGVRLRRT.

The protein belongs to the MTSS family. In terms of assembly, interacts (via IMD domain) with RAC1; this interaction may be important to potentiate PDGF-induced RAC1 activation.

The protein localises to the cytoplasm. Its subcellular location is the cell projection. It localises to the ruffle. Its function is as follows. Involved in plasma membrane dynamics. Potentiated PDGF-mediated formation of membrane ruffles and lamellipodia in fibroblasts, acting via RAC1 activation. May function in actin bundling. This Homo sapiens (Human) protein is Protein MTSS 2.